Here is a 151-residue protein sequence, read N- to C-terminus: MKYQQLENLECGWKWNYLVKKWKEGESITCHIDSSEADVAVQALLKLEHQPTGVLEWISDNMSPELDNKLKQAIRAKRKRHFNAEQVHTKKKSIDLDYRVWEKLSQRANELGCTLSDAIEYLVSEASRSEQASKTVTNLKEDLSKLLSDDK.

This sequence belongs to the MatP family. Homodimer.

Its subcellular location is the cytoplasm. In terms of biological role, required for spatial organization of the terminus region of the chromosome (Ter macrodomain) during the cell cycle. Prevents early segregation of duplicated Ter macrodomains during cell division. Binds specifically to matS, which is a 13 bp signature motif repeated within the Ter macrodomain. The protein is Macrodomain Ter protein of Vibrio atlanticus (strain LGP32) (Vibrio splendidus (strain Mel32)).